A 118-amino-acid chain; its full sequence is Ribonuclease P protein component (118 aa).

Belongs to the RnpA family. In terms of assembly, consists of a catalytic RNA component (M1 or rnpB) and a protein subunit.

The catalysed reaction is Endonucleolytic cleavage of RNA, removing 5'-extranucleotides from tRNA precursor.. Functionally, RNaseP catalyzes the removal of the 5'-leader sequence from pre-tRNA to produce the mature 5'-terminus. It can also cleave other RNA substrates such as 4.5S RNA. The protein component plays an auxiliary but essential role in vivo by binding to the 5'-leader sequence and broadening the substrate specificity of the ribozyme. The polypeptide is Ribonuclease P protein component (Bifidobacterium animalis subsp. lactis (strain AD011)).